The chain runs to 351 residues: Anthranilate phosphoribosyltransferase (351 aa).

5-phospho-alpha-D-ribose 1-diphosphate contacts are provided by residues G89, 92–93 (GD), T97, 99–102 (NIST), 117–125 (KHGNRSASG), and S129. G89 is a binding site for anthranilate. Mg(2+) is bound at residue S101. Position 120 (N120) interacts with anthranilate. R175 is a binding site for anthranilate. The Mg(2+) site is built by D234 and E235.

It belongs to the anthranilate phosphoribosyltransferase family. Homodimer. The cofactor is Mg(2+).

It catalyses the reaction N-(5-phospho-beta-D-ribosyl)anthranilate + diphosphate = 5-phospho-alpha-D-ribose 1-diphosphate + anthranilate. It functions in the pathway amino-acid biosynthesis; L-tryptophan biosynthesis; L-tryptophan from chorismate: step 2/5. Its function is as follows. Catalyzes the transfer of the phosphoribosyl group of 5-phosphorylribose-1-pyrophosphate (PRPP) to anthranilate to yield N-(5'-phosphoribosyl)-anthranilate (PRA). The polypeptide is Anthranilate phosphoribosyltransferase (Synechococcus sp. (strain CC9902)).